The primary structure comprises 432 residues: Homogentisate 1,2-dioxygenase (432 aa).

The active-site Proton acceptor is His287. Fe cation contacts are provided by His330 and Glu336. The homogentisate site is built by Tyr345 and His366. His366 contacts Fe cation.

This sequence belongs to the homogentisate dioxygenase family. In terms of assembly, hexamer; dimer of trimers. Fe cation serves as cofactor.

It catalyses the reaction homogentisate + O2 = 4-maleylacetoacetate + H(+). Its pathway is amino-acid degradation; L-phenylalanine degradation; acetoacetate and fumarate from L-phenylalanine: step 4/6. In terms of biological role, involved in the catabolism of homogentisate (2,5-dihydroxyphenylacetate or 2,5-OH-PhAc), a central intermediate in the degradation of phenylalanine and tyrosine. Catalyzes the oxidative ring cleavage of the aromatic ring of homogentisate to yield maleylacetoacetate. The protein is Homogentisate 1,2-dioxygenase of Pseudomonas aeruginosa (strain ATCC 15692 / DSM 22644 / CIP 104116 / JCM 14847 / LMG 12228 / 1C / PRS 101 / PAO1).